Reading from the N-terminus, the 330-residue chain is Ferredoxin--NADP reductase (330 aa).

Positions 35, 43, 48, 90, 123, 285, and 326 each coordinate FAD.

Belongs to the ferredoxin--NADP reductase type 2 family. Homodimer. FAD serves as cofactor.

The enzyme catalyses 2 reduced [2Fe-2S]-[ferredoxin] + NADP(+) + H(+) = 2 oxidized [2Fe-2S]-[ferredoxin] + NADPH. The protein is Ferredoxin--NADP reductase of Streptococcus agalactiae serotype Ia (strain ATCC 27591 / A909 / CDC SS700).